The primary structure comprises 338 residues: tRNA N6-adenosine threonylcarbamoyltransferase (338 aa).

Residues histidine 111 and histidine 115 each contribute to the Fe cation site. Residues 134–138 (LVSGG), aspartate 167, glycine 180, and asparagine 272 contribute to the substrate site. Aspartate 300 serves as a coordination point for Fe cation.

It belongs to the KAE1 / TsaD family. Fe(2+) serves as cofactor.

It localises to the cytoplasm. It carries out the reaction L-threonylcarbamoyladenylate + adenosine(37) in tRNA = N(6)-L-threonylcarbamoyladenosine(37) in tRNA + AMP + H(+). Its function is as follows. Required for the formation of a threonylcarbamoyl group on adenosine at position 37 (t(6)A37) in tRNAs that read codons beginning with adenine. Is involved in the transfer of the threonylcarbamoyl moiety of threonylcarbamoyl-AMP (TC-AMP) to the N6 group of A37, together with TsaE and TsaB. TsaD likely plays a direct catalytic role in this reaction. This Shewanella sp. (strain ANA-3) protein is tRNA N6-adenosine threonylcarbamoyltransferase.